Consider the following 333-residue polypeptide: Fructose-1,6-bisphosphatase class 1 (333 aa).

Positions 92, 114, 116, and 117 each coordinate Mg(2+). Substrate-binding positions include 117 to 120 (DGSS) and N209. E279 provides a ligand contact to Mg(2+).

The protein belongs to the FBPase class 1 family. Homotetramer. It depends on Mg(2+) as a cofactor.

The protein localises to the cytoplasm. It catalyses the reaction beta-D-fructose 1,6-bisphosphate + H2O = beta-D-fructose 6-phosphate + phosphate. It participates in carbohydrate biosynthesis; gluconeogenesis. The protein is Fructose-1,6-bisphosphatase class 1 of Alkalilimnicola ehrlichii (strain ATCC BAA-1101 / DSM 17681 / MLHE-1).